A 116-amino-acid polypeptide reads, in one-letter code: Immunoglobulin heavy variable 2-4 (116 aa).

A signal peptide spans 1–19 (MAVLVLLFCLVTFPSCVLS). The region spanning 20–116 (QVQLKQSGPG…DDTAIYYCAK (97 aa)) is the Ig-like domain. Cysteines 41 and 114 form a disulfide.

The polypeptide is Immunoglobulin heavy variable 2-4 (Mus musculus (Mouse)).